The following is a 313-amino-acid chain: PQCESETNFHYDIPPGYKDDVLVDVNNMSPSLVSDTQKHERGSHEVKIKHFSPYIAVCVTTFSLAFCCFMVHAAITRQPTHLLPFFFIQVFDLIICLIHILGFMSSTSDIRLVIHTKTGPIYIKSTGLTFIILSISCMMLAFKAYCLGMVWDCYKYLMLNRRGNLLDDWYSDQWGHLSTFWSLLRTGRNRGNNSIGNSGSPNEPNTRPRPDTITYDPANDLPKYEDILKIRNAYAPPPYYCSNTNGNVNTTTTDAVTTNTTITSATTANATTTITTNANTNTSTTTSVISPLTTTNKDDTQINNASSNAHSSC.

Over 1–54 (PQCESETNFHYDIPPGYKDDVLVDVNNMSPSLVSDTQKHERGSHEVKIKHFSPY) the chain is Extracellular. Residues 55–75 (IAVCVTTFSLAFCCFMVHAAI) form a helical membrane-spanning segment. The Cytoplasmic segment spans residues 76 to 82 (TRQPTHL). A helical transmembrane segment spans residues 83-103 (LPFFFIQVFDLIICLIHILGF). Over 104 to 129 (MSSTSDIRLVIHTKTGPIYIKSTGLT) the chain is Extracellular. The helical transmembrane segment at 130–150 (FIILSISCMMLAFKAYCLGMV) threads the bilayer. Residues 151–313 (WDCYKYLMLN…NASSNAHSSC (163 aa)) lie on the Cytoplasmic side of the membrane. 2 disordered regions span residues 192–218 (NNSI…YDPA) and 279–313 (NTNT…HSSC). Residues 279-295 (NTNTSTTTSVISPLTTT) show a composition bias toward low complexity. Polar residues predominate over residues 301–313 (QINNASSNAHSSC).

In terms of assembly, interacts (via N-terminal extracellular domain) with human C2a. Post-translationally, phosphorylated on tyrosine residues.

The protein localises to the cell membrane. In terms of biological role, cell surface receptor that binds to human complement C2a protein. This results in inhibition of the classical and lectin pathways of complement activation, probably due to interference with binding of C2a to C4b and interference with cleavage by C1 or MASP2 such that C3 convertase cannot be formed. This infers resistance to complement-mediated cell lysis, allowing parasite survival and infection. The protein is Tetraspanning orphan receptor of Schistosoma haematobium (Blood fluke).